A 444-amino-acid chain; its full sequence is tRNA (guanine-N(7)-)-methyltransferase non-catalytic subunit TRM82 (444 aa).

WD repeat units follow at residues 1-47, 48-99, 100-147, 148-192, 193-237, 238-279, and 308-354; these read MSVI…WSDD, FDKI…LGAP, PIYS…KRFC, FSKR…EPIL, GHVS…DKWL, FGHK…STFD, and FAVS…ITFP. The interval 55-92 is disordered; the sequence is RNTTAKEQQGQSSENENENKKLKSNKGDSIKRTAAKVP. The span at 71 to 85 shows a compositional bias: basic and acidic residues; it reads NENKKLKSNKGDSIK. Serine 93 bears the Phosphoserine mark.

This sequence belongs to the WD repeat TRM82 family. In terms of assembly, forms a heterodimer with the catalytic subunit TRM8.

The protein localises to the nucleus. Its pathway is tRNA modification; N(7)-methylguanine-tRNA biosynthesis. Its function is as follows. Required for the formation of N(7)-methylguanine at position 46 (m7G46) in tRNA, a modification required to maintain stability of tRNAs; its absence resulting in tRNA decay. In the complex, it is required to stabilize and induce conformational changes of the catalytic subunit. The protein is tRNA (guanine-N(7)-)-methyltransferase non-catalytic subunit TRM82 of Saccharomyces cerevisiae (strain ATCC 204508 / S288c) (Baker's yeast).